A 324-amino-acid polypeptide reads, in one-letter code: Mevalonate-3-kinase (324 aa).

L19 lines the substrate pocket. 109–112 (SGSS) provides a ligand contact to ATP. The substrate site is built by E145 and R149. ATP is bound by residues R190 and S193.

This sequence belongs to the GHMP kinase family. As to quaternary structure, homodimer.

The enzyme catalyses (R)-mevalonate + ATP = (R)-3-phosphomevalonate + ADP + H(+). The protein operates within isoprenoid biosynthesis; isopentenyl diphosphate biosynthesis via mevalonate pathway. In terms of biological role, catalyzes the phosphorylation of mevalonate (MVA) to yield mevalonate-3-phosphate. Functions in an alternative mevalonate pathway, which passes through mevalonate 3-phosphate rather than mevalonate 5-phosphate. Also able to catalyze the formation of isobutene via the conversion of 3-hydroxyisovalerate (3-HIV) to an unstable 3-phosphate intermediate that undergoes a spontaneous decarboxylation. This Picrophilus torridus (strain ATCC 700027 / DSM 9790 / JCM 10055 / NBRC 100828 / KAW 2/3) protein is Mevalonate-3-kinase.